The chain runs to 886 residues: Translation initiation factor IF-2 (886 aa).

Disordered stretches follow at residues Met-1 to Pro-25, Arg-50 to Glu-229, and Lys-253 to Glu-272. Basic and acidic residues predominate over residues Arg-50 to Arg-60. Residues Ala-63 to Pro-73 show a composition bias toward low complexity. The segment covering Gln-74 to Gln-83 has biased composition (pro residues). Low complexity predominate over residues Pro-84 to Ser-106. Residues Leu-107–Arg-181 are compositionally biased toward basic and acidic residues. Positions Gly-185–Arg-225 are enriched in low complexity. Residues Ser-383–Lys-553 form the tr-type G domain. Positions Gly-392–Thr-399 are G1. Gly-392 to Thr-399 serves as a coordination point for GTP. The tract at residues Gly-417–His-421 is G2. Residues Asp-439–Gly-442 are G3. GTP-binding positions include Asp-439–His-443 and Asn-493–Asp-496. The interval Asn-493–Asp-496 is G4. Residues Ser-529 to Thr-531 are G5.

This sequence belongs to the TRAFAC class translation factor GTPase superfamily. Classic translation factor GTPase family. IF-2 subfamily.

The protein resides in the cytoplasm. Functionally, one of the essential components for the initiation of protein synthesis. Protects formylmethionyl-tRNA from spontaneous hydrolysis and promotes its binding to the 30S ribosomal subunits. Also involved in the hydrolysis of GTP during the formation of the 70S ribosomal complex. The polypeptide is Translation initiation factor IF-2 (Methylocella silvestris (strain DSM 15510 / CIP 108128 / LMG 27833 / NCIMB 13906 / BL2)).